The following is a 408-amino-acid chain: Secreted mono- and diacylglycerol lipase 2 (408 aa).

Positions 1-24 (MRFKLADSLSLITVQLILATSTLA) are cleaved as a signal peptide. Asn177 carries N-linked (GlcNAc...) asparagine glycosylation. The Nucleophile role is filled by Ser217. Residues Asp283 and His374 contribute to the active site.

Belongs to the AB hydrolase superfamily. Lipase family. Class 3 subfamily.

The protein localises to the secreted. It carries out the reaction a monoacylglycerol + H2O = glycerol + a fatty acid + H(+). The enzyme catalyses a diacylglycerol + H2O = a monoacylglycerol + a fatty acid + H(+). Secreted mono- and diacylglycerol lipase involved in plant virulence. Has a substrate preference for p-nitrophenyl esters with a carbon chain length of C10 (p-nitrophenyl caprate). This is Secreted mono- and diacylglycerol lipase 2 from Gibberella zeae (strain ATCC MYA-4620 / CBS 123657 / FGSC 9075 / NRRL 31084 / PH-1) (Wheat head blight fungus).